The primary structure comprises 436 residues: GTPase Der (436 aa).

EngA-type G domains lie at 4–165 (NVIA…NFDS) and 172–347 (FKLS…ENLE). Residues 10-17 (GKPNVGKS), 57-61 (DTGGI), 119-122 (NKLD), 178-185 (GQPNSGKS), 225-229 (DTAGI), and 290-293 (NKWD) contribute to the GTP site. Residues 348 to 432 (REIKPSVLTN…PINIIFKNKS (85 aa)) enclose the KH-like domain.

This sequence belongs to the TRAFAC class TrmE-Era-EngA-EngB-Septin-like GTPase superfamily. EngA (Der) GTPase family. In terms of assembly, associates with the 50S ribosomal subunit.

GTPase that plays an essential role in the late steps of ribosome biogenesis. In Mycoplasmopsis agalactiae (strain NCTC 10123 / CIP 59.7 / PG2) (Mycoplasma agalactiae), this protein is GTPase Der.